We begin with the raw amino-acid sequence, 288 residues long: MKKIAIFGSRHKSEQGASIKALILKLEEAGTPLYIERKFLSFLKQDLDFHPAICGVIDTLPEHIDYVICMGGDGTFLRTAHQIGVSQIPVLGVNTGRLGFLTDVDCHEASELITRLLDGDFTIETRSLLEVTEDNGSSPSYALNEAAILKRETGSMIRVNACLNDDYLAAYDADGLVVATPSGSTAYSLSGNGPIIMPACRNFVLTPIAPHSLNMRPLVVPDDTVIRLEVDSRSRNYLLVLDGRTRTLPCDTSILLKRAPHTLRMIRLRPHSFAETLRRKLMWGAAVR.

Asp-73 acts as the Proton acceptor in catalysis. NAD(+) is bound by residues 73-74 (DG), Arg-78, 144-145 (NE), Asp-174, 185-190 (TAYSLS), and Ala-209.

The protein belongs to the NAD kinase family. Requires a divalent metal cation as cofactor.

It is found in the cytoplasm. It carries out the reaction NAD(+) + ATP = ADP + NADP(+) + H(+). In terms of biological role, involved in the regulation of the intracellular balance of NAD and NADP, and is a key enzyme in the biosynthesis of NADP. Catalyzes specifically the phosphorylation on 2'-hydroxyl of the adenosine moiety of NAD to yield NADP. This Porphyromonas gingivalis (strain ATCC BAA-308 / W83) protein is NAD kinase.